The chain runs to 283 residues: GTPase Era (283 aa).

The 169-residue stretch at 7 to 175 folds into the Era-type G domain; it reads YCGHVIIVGK…KNIIKSYLPE (169 aa). A G1 region spans residues 15–22; sequence GKANVGKS. 15 to 22 is a GTP binding site; that stretch reads GKANVGKS. The interval 41–45 is G2; that stretch reads NTTQS. The interval 62 to 65 is G3; that stretch reads DTPG. GTP contacts are provided by residues 62 to 66 and 124 to 127; these read DTPGV and NKID. Residues 124-127 are G4; that stretch reads NKID. The segment at 154-156 is G5; that stretch reads ISA. A KH type-2 domain is found at 198–283; the sequence is IREQLILFLG…HLVLWVKDKN (86 aa).

It belongs to the TRAFAC class TrmE-Era-EngA-EngB-Septin-like GTPase superfamily. Era GTPase family. In terms of assembly, monomer.

It is found in the cytoplasm. Its subcellular location is the cell membrane. An essential GTPase that binds both GDP and GTP, with rapid nucleotide exchange. Plays a role in 16S rRNA processing and 30S ribosomal subunit biogenesis and possibly also in cell cycle regulation and energy metabolism. This chain is GTPase Era, found in Buchnera aphidicola subsp. Acyrthosiphon pisum (strain APS) (Acyrthosiphon pisum symbiotic bacterium).